The primary structure comprises 318 residues: Ribosomal RNA small subunit methyltransferase H (318 aa).

Residues 35-37, Asp-54, Phe-83, Asp-104, and Gln-111 contribute to the S-adenosyl-L-methionine site; that span reads GGH.

Belongs to the methyltransferase superfamily. RsmH family.

It is found in the cytoplasm. It carries out the reaction cytidine(1402) in 16S rRNA + S-adenosyl-L-methionine = N(4)-methylcytidine(1402) in 16S rRNA + S-adenosyl-L-homocysteine + H(+). In terms of biological role, specifically methylates the N4 position of cytidine in position 1402 (C1402) of 16S rRNA. The protein is Ribosomal RNA small subunit methyltransferase H of Latilactobacillus sakei subsp. sakei (strain 23K) (Lactobacillus sakei subsp. sakei).